A 450-amino-acid polypeptide reads, in one-letter code: Phosphoglucosamine mutase (450 aa).

Catalysis depends on serine 101, which acts as the Phosphoserine intermediate. Serine 101, aspartate 241, aspartate 243, and aspartate 245 together coordinate Mg(2+). Serine 101 bears the Phosphoserine mark.

This sequence belongs to the phosphohexose mutase family. Mg(2+) is required as a cofactor. Activated by phosphorylation.

It catalyses the reaction alpha-D-glucosamine 1-phosphate = D-glucosamine 6-phosphate. In terms of biological role, catalyzes the conversion of glucosamine-6-phosphate to glucosamine-1-phosphate. The sequence is that of Phosphoglucosamine mutase from Ligilactobacillus salivarius (strain UCC118) (Lactobacillus salivarius).